The primary structure comprises 92 residues: Small ribosomal subunit protein uS19c (92 aa).

Belongs to the universal ribosomal protein uS19 family.

It is found in the plastid. It localises to the chloroplast. Its function is as follows. Protein S19 forms a complex with S13 that binds strongly to the 16S ribosomal RNA. In Physcomitrium patens (Spreading-leaved earth moss), this protein is Small ribosomal subunit protein uS19c.